The sequence spans 267 residues: Tryptophan synthase alpha chain (267 aa).

Catalysis depends on proton acceptor residues Glu-49 and Asp-60.

This sequence belongs to the TrpA family. Tetramer of two alpha and two beta chains.

It catalyses the reaction (1S,2R)-1-C-(indol-3-yl)glycerol 3-phosphate + L-serine = D-glyceraldehyde 3-phosphate + L-tryptophan + H2O. It functions in the pathway amino-acid biosynthesis; L-tryptophan biosynthesis; L-tryptophan from chorismate: step 5/5. The alpha subunit is responsible for the aldol cleavage of indoleglycerol phosphate to indole and glyceraldehyde 3-phosphate. This Acinetobacter baumannii (strain AB307-0294) protein is Tryptophan synthase alpha chain.